We begin with the raw amino-acid sequence, 488 residues long: 3-octaprenyl-4-hydroxybenzoate carboxy-lyase (488 aa).

A Mn(2+)-binding site is contributed by Asn-172. Prenylated FMN-binding positions include 175–177 (IYR), 189–191 (RWL), and 194–195 (RG). Glu-238 contacts Mn(2+). Asp-287 acts as the Proton donor in catalysis.

This sequence belongs to the UbiD family. Homohexamer. The cofactor is prenylated FMN. Mn(2+) is required as a cofactor.

The protein localises to the cell membrane. The catalysed reaction is a 4-hydroxy-3-(all-trans-polyprenyl)benzoate + H(+) = a 2-(all-trans-polyprenyl)phenol + CO2. The protein operates within cofactor biosynthesis; ubiquinone biosynthesis. Its function is as follows. Catalyzes the decarboxylation of 3-octaprenyl-4-hydroxy benzoate to 2-octaprenylphenol, an intermediate step in ubiquinone biosynthesis. This is 3-octaprenyl-4-hydroxybenzoate carboxy-lyase from Pseudomonas putida (strain GB-1).